The chain runs to 601 residues: Elongation factor 4 (601 aa).

Residues Ser-6–Glu-188 form the tr-type G domain. Residues Asp-18–Thr-23 and Asn-135–Asp-138 contribute to the GTP site.

It belongs to the TRAFAC class translation factor GTPase superfamily. Classic translation factor GTPase family. LepA subfamily.

It is found in the cell inner membrane. It carries out the reaction GTP + H2O = GDP + phosphate + H(+). Functionally, required for accurate and efficient protein synthesis under certain stress conditions. May act as a fidelity factor of the translation reaction, by catalyzing a one-codon backward translocation of tRNAs on improperly translocated ribosomes. Back-translocation proceeds from a post-translocation (POST) complex to a pre-translocation (PRE) complex, thus giving elongation factor G a second chance to translocate the tRNAs correctly. Binds to ribosomes in a GTP-dependent manner. The polypeptide is Elongation factor 4 (Anaeromyxobacter dehalogenans (strain 2CP-C)).